Here is a 63-residue protein sequence, read N- to C-terminus: Beta-insect depressant toxin Im-3 (63 aa).

Positions 1 to 63 constitute an LCN-type CS-alpha/beta domain; it reads KEGYGVGKDG…KVWESSTNTC (63 aa). Intrachain disulfides connect Cys-11–Cys-63, Cys-15–Cys-37, Cys-22–Cys-44, and Cys-26–Cys-46.

Belongs to the long (4 C-C) scorpion toxin superfamily. Sodium channel inhibitor family. Beta subfamily. In terms of tissue distribution, expressed by the venom gland.

The protein resides in the secreted. Functionally, beta toxins bind voltage-independently at site-4 of sodium channels (Nav) and shift the voltage of activation toward more negative potentials thereby affecting sodium channel activation and promoting spontaneous and repetitive firing. Induces paralysis in cricket A.domestica but does not induce death. The sequence is that of Beta-insect depressant toxin Im-3 from Isometrus maculatus (Lesser brown scorpion).